Here is a 396-residue protein sequence, read N- to C-terminus: Elongation factor Tu (396 aa).

One can recognise a tr-type G domain in the interval 10–206; sequence KLHVNVGTIG…ALDTHIPNPE (197 aa). The tract at residues 19 to 26 is G1; the sequence is GHVDHGKT. 19-26 is a GTP binding site; the sequence is GHVDHGKT. T26 lines the Mg(2+) pocket. Positions 60-64 are G2; the sequence is GITIS. Residues 81 to 84 form a G3 region; the sequence is DCPG. GTP is bound by residues 81–85 and 136–139; these read DCPGH and NKAD. Residues 136–139 form a G4 region; sequence NKAD. The segment at 174–176 is G5; it reads SAL.

It belongs to the TRAFAC class translation factor GTPase superfamily. Classic translation factor GTPase family. EF-Tu/EF-1A subfamily. Monomer.

It localises to the cytoplasm. It catalyses the reaction GTP + H2O = GDP + phosphate + H(+). Functionally, GTP hydrolase that promotes the GTP-dependent binding of aminoacyl-tRNA to the A-site of ribosomes during protein biosynthesis. This is Elongation factor Tu from Xylella fastidiosa (strain 9a5c).